A 210-amino-acid chain; its full sequence is Putative polysaccharide-binding protein (210 aa).

The N-terminal stretch at 1 to 22 (MGFLKGTAAALTLLSAAAAASA) is a signal peptide. CBM1 domains are found at residues 23-62 (CGVL…AMPG), 63-105 (MMGQ…LANK), 125-165 (CGKE…APPP), and 166-210 (KMGE…PMHP).

In Porphyra purpurea (Red seaweed), this protein is Putative polysaccharide-binding protein.